Reading from the N-terminus, the 224-residue chain is uncharacterized protein (224 aa).

This is an uncharacterized protein from Methanocaldococcus jannaschii (strain ATCC 43067 / DSM 2661 / JAL-1 / JCM 10045 / NBRC 100440) (Methanococcus jannaschii).